Consider the following 427-residue polypeptide: Sialic acid TRAP transporter large permease protein SiaM (427 aa).

12 helical membrane passes run 11-31 (LLFA…AFLI), 52-72 (FTLL…SAGI), 82-102 (SLVG…SLLF), 140-160 (ASCI…YGVV), 165-185 (IGAL…ALMV), 214-234 (AFLS…GKFT), 246-266 (ALFL…IEIL), 270-290 (VNTT…GWIV), 301-321 (DYFL…NLLL), 322-342 (LFLG…PFLV), 348-368 (VGID…IGIL), and 394-414 (VLPL…FPQF).

This sequence belongs to the TRAP transporter large permease family. The complex comprises the extracytoplasmic solute receptor protein SiaP, and the two transmembrane proteins SiaQ and SiaM. SiaQ and SiaM form a tight 1:1 complex.

Its subcellular location is the cell inner membrane. Functionally, part of the tripartite ATP-independent periplasmic (TRAP) transport system SiaPQM that catalyzes unidirectional Na(+)-dependent sialic acid uptake. This Vibrio cholerae serotype O1 (strain ATCC 39315 / El Tor Inaba N16961) protein is Sialic acid TRAP transporter large permease protein SiaM.